Here is a 385-residue protein sequence, read N- to C-terminus: UPF0284 protein P9301_04631 (385 aa).

It belongs to the UPF0284 family.

This Prochlorococcus marinus (strain MIT 9301) protein is UPF0284 protein P9301_04631.